The primary structure comprises 88 residues: Small ribosomal subunit protein bS20 (88 aa).

The protein belongs to the bacterial ribosomal protein bS20 family.

Functionally, binds directly to 16S ribosomal RNA. The sequence is that of Small ribosomal subunit protein bS20 from Oenococcus oeni (strain ATCC BAA-331 / PSU-1).